Here is a 285-residue protein sequence, read N- to C-terminus: Bifunctional protein FolD (285 aa).

NADP(+)-binding positions include 165–167 (GRS) and Ser190.

It belongs to the tetrahydrofolate dehydrogenase/cyclohydrolase family. In terms of assembly, homodimer.

It catalyses the reaction (6R)-5,10-methylene-5,6,7,8-tetrahydrofolate + NADP(+) = (6R)-5,10-methenyltetrahydrofolate + NADPH. It carries out the reaction (6R)-5,10-methenyltetrahydrofolate + H2O = (6R)-10-formyltetrahydrofolate + H(+). It participates in one-carbon metabolism; tetrahydrofolate interconversion. Catalyzes the oxidation of 5,10-methylenetetrahydrofolate to 5,10-methenyltetrahydrofolate and then the hydrolysis of 5,10-methenyltetrahydrofolate to 10-formyltetrahydrofolate. The polypeptide is Bifunctional protein FolD (Staphylococcus haemolyticus (strain JCSC1435)).